The sequence spans 319 residues: Thymidylate synthase (319 aa).

DUMP contacts are provided by residues arginine 25 and arginine 181–arginine 182. The Nucleophile role is filled by cysteine 201. DUMP-binding positions include arginine 221–aspartate 224, asparagine 232, and histidine 262–tyrosine 264. Aspartate 224 is a (6R)-5,10-methylene-5,6,7,8-tetrahydrofolate binding site. Alanine 318 contributes to the (6R)-5,10-methylene-5,6,7,8-tetrahydrofolate binding site.

This sequence belongs to the thymidylate synthase family. Bacterial-type ThyA subfamily. In terms of assembly, homodimer.

It is found in the cytoplasm. It catalyses the reaction dUMP + (6R)-5,10-methylene-5,6,7,8-tetrahydrofolate = 7,8-dihydrofolate + dTMP. Its pathway is pyrimidine metabolism; dTTP biosynthesis. Catalyzes the reductive methylation of 2'-deoxyuridine-5'-monophosphate (dUMP) to 2'-deoxythymidine-5'-monophosphate (dTMP) while utilizing 5,10-methylenetetrahydrofolate (mTHF) as the methyl donor and reductant in the reaction, yielding dihydrofolate (DHF) as a by-product. This enzymatic reaction provides an intracellular de novo source of dTMP, an essential precursor for DNA biosynthesis. The chain is Thymidylate synthase from Oenococcus oeni (strain ATCC BAA-331 / PSU-1).